The chain runs to 166 residues: Dihydrofolate reductase (166 aa).

The DHFR domain occupies 6–164; sequence KISLIVAMDK…YDYYFHIYER (159 aa). A substrate-binding site is contributed by 10-12; sequence IVA. NADP(+)-binding positions include 11–12 and 19–24; these read VA and IGKDND. Residue D32 participates in substrate binding. An NADP(+)-binding site is contributed by 48-51; sequence GRKN. Substrate is bound at residue R62. NADP(+)-binding positions include 67-70 and 100-105; these read LTRD and FGGEQI. Residue T119 participates in substrate binding.

The protein belongs to the dihydrofolate reductase family.

It catalyses the reaction (6S)-5,6,7,8-tetrahydrofolate + NADP(+) = 7,8-dihydrofolate + NADPH + H(+). The protein operates within cofactor biosynthesis; tetrahydrofolate biosynthesis; 5,6,7,8-tetrahydrofolate from 7,8-dihydrofolate: step 1/1. Its function is as follows. Key enzyme in folate metabolism. Catalyzes an essential reaction for de novo glycine and purine synthesis, and for DNA precursor synthesis. This chain is Dihydrofolate reductase (dfrD), found in Staphylococcus haemolyticus.